A 221-amino-acid polypeptide reads, in one-letter code: Orotate phosphoribosyltransferase (221 aa).

5-phospho-alpha-D-ribose 1-diphosphate is bound at residue Lys-26. 34–35 (FF) lines the orotate pocket. 5-phospho-alpha-D-ribose 1-diphosphate contacts are provided by residues 72–73 (YK), Arg-98, Lys-99, Lys-102, His-104, and 123–131 (DDVISAGTS). The orotate site is built by Ser-127 and Arg-155.

Belongs to the purine/pyrimidine phosphoribosyltransferase family. PyrE subfamily. In terms of assembly, homodimer. Requires Mg(2+) as cofactor.

It carries out the reaction orotidine 5'-phosphate + diphosphate = orotate + 5-phospho-alpha-D-ribose 1-diphosphate. The protein operates within pyrimidine metabolism; UMP biosynthesis via de novo pathway; UMP from orotate: step 1/2. In terms of biological role, catalyzes the transfer of a ribosyl phosphate group from 5-phosphoribose 1-diphosphate to orotate, leading to the formation of orotidine monophosphate (OMP). In Herminiimonas arsenicoxydans, this protein is Orotate phosphoribosyltransferase.